The following is a 563-amino-acid chain: Coiled-coil domain-containing protein 38 (563 aa).

The segment covering 1–11 (MSSNLLPTLNS) has biased composition (polar residues). A disordered region spans residues 1-21 (MSSNLLPTLNSGGKVKDGSTK). The stretch at 129–212 (KRNTIKKFEK…VKSEIAKTEF (84 aa)) forms a coiled coil. Residues 272–311 (ESGRTAVLSEDASQGRDSQGKPSRSLTRTPEKKKSNLAES) are disordered. Positions 282–299 (DASQGRDSQGKPSRSLTR) are enriched in polar residues. 2 coiled-coil regions span residues 384–415 (NIEFLLEQEKMLKANCVREEEKAAELQLKSKL) and 497–522 (RDEKMKEKQRHQQERLKAALEKAVAQ). The disordered stretch occupies residues 522–563 (QPKKKLGRRLVFHSKPPSGNKQQLPLVNETKTKSQEEEYFFT). Residues 523–533 (PKKKLGRRLVF) are compositionally biased toward basic residues.

As to quaternary structure, interacts with CCDC42, CFAP53, IFT88 and ODF2. Interacts with CCDC146. Interacts with TEKT3. Interacts with ubiquitinated histone H2A.

It localises to the cytoplasm. The protein resides in the cytoskeleton. It is found in the microtubule organizing center. The protein localises to the centrosome. Its subcellular location is the perinuclear region. It localises to the cell projection. The protein resides in the cilium. It is found in the flagellum. Essential for male fertility. Required for sperm flagellum biogenesis. Also required for acrosome biogenesis. Required for the attachment of developing acrosomes to the nucleus during spermiogenesis and may be involved in the transport of fibrous sheath components. The polypeptide is Coiled-coil domain-containing protein 38 (CCDC38) (Homo sapiens (Human)).